The sequence spans 396 residues: Major outer membrane porin, serovar A (396 aa).

The signal sequence occupies residues Met-1–Ala-22.

This sequence belongs to the chlamydial porin (CP) (TC 1.B.2) family. As to quaternary structure, part of a disulfide cross-linked outer membrane complex (COMC) composed of the major outer membrane porin (MOMP), the small cysteine-rich protein (OmcA) and the large cysteine-rich periplasmic protein (OmcB).

The protein localises to the cell outer membrane. In terms of biological role, in elementary bodies (EBs, the infectious stage, which is able to survive outside the host cell) provides the structural integrity of the outer envelope through disulfide cross-links with the small cysteine-rich protein and the large cysteine-rich periplasmic protein. It has been described in publications as the Sarkosyl-insoluble COMC (Chlamydia outer membrane complex), and serves as the functional equivalent of peptidoglycan. Functionally, permits diffusion of specific solutes through the outer membrane. In Chlamydia trachomatis, this protein is Major outer membrane porin, serovar A (ompA).